Reading from the N-terminus, the 2325-residue chain is MRNRLLLIFYTTTVLWTIGYTQLVLGKPPIFQDGGSVEQKVAVEGEIIRLKCDDAELAEQYEWRIGDASGELIATSKFCEVQASRVNDEKKYRCVARNTVGAAISPPSMVRSKYLDDFDASDESVQYEVTTGVGRYFVLRRPTLLASRNLDISYSWIKDDSHQVTPDATHFVTSDGNLVVTGVKRDDFGAYKLMASSDDLKEIVSKEYNVRDNGLSPSLQNTLSIVYFPTDRTIIESTLPHDEIFDCVTSFGSKDDVRIRWFLNGQQISGSEVGMTTTLNNRRLIISNPSSFTRGEHKLECRADAAMGRTSDQKSAYMTFISRPILKDLPNEIQKTVGSSLSLKCSVKKKSSMDIKWYKNGLMMTTQRGKLTIDRIKQDDFGLYQCEATNAAGADLASVWVKEGEANETVATEMSEDGMSLEEEISMETPPPRKLKFFDNSKSQEQLFPFTSELEPSQKLIKTPKDLTVASGTDRIMMECAATGSPPPNIIWLLNGHEIQTDNVKYDLTNDGLAIHDIRKSDEGEYTCEISGSNVKATANVQVNGDSLIEYGPADQKSLIGTNVEFSCEVAKEYVRKASVEWYLNDVLLPVNGNSGLRISRNRKGSLIIRQVGPDNTGEYRCRVTVDGREENASAMLQIIEKPAMPERVRAELHNETMPAKVRVRWNEGFDGNEPIIKHAIEMRTMGPTGLWSDWTTAIDNIPKEEGKPCCWTDIEDLRPSSTAEFRVVASNKHGPGKPSLPSYSVTMPQQPPSAAPRNVAASARSPHSVMVQWQQPKEELDSGDVLGYVVRYRLAGYSSLTWNEKNLTTKDARNTLVDELITWREYEIQVAAYNKRGLGVFSESIEVTTSEGRPTQAPKNVRVKVLNSTAVAIEFTAPEQQRIPGVNLGYKVQFWKGEPEKGELYKQVILDPDRRQLTTVVNELEKFGHYNLTTLCFTTPGDGPRSNVVKVVTEEDTPESVDELSIAEVMYNGAVITWNSPLKQNGIVTKYTIRHWAASSPDVKTKHEVDGSTTNFTIDGLQPSTRYGVDVMASTRKGDGPVEETKFESGVPPELPGRPSMLSIGDISATTVQLHFTPGFDGHTAIRQWVVEGKMADSSVFAHVFNVSAPKARSITVTGLRPFTQYQLRLIAENVKGRGAPSEPSRSFETLQTNPDTPSQRLFAEPVSATSISVSWTPLLATHWNGQPKGYLIVYREIDDENWKEVRTPALRSSEHTVTDLRPFTSYEVNVFSENGFGRSLPTDSVKARTYESVPSGSPRNIVVTAEGSKAAIIKWNPVAELSTNGDVIGYKLRVVPERESLMADETKVIDIPGQSTLMAKVSDLRPFTSYHVYMSAYTIVGNGPENSTPISFETMEDVPAPPESFQCSYISEQEVRMKWLPPGSPNGKITNYIISYWKSHEPRSMAIDAPLLGNLLMFAAMSLNPNTQYTFAIKARNSKGESEEAVAEVMTSSVRLPVRNAPAPVRDTLSQHQATEIIIRWDESLPRKLTEDAESPVRAVQVSYQKTNEDEWITLEKKFEYSKRRSVIKHLSPNSMFRFRIRFIGDFLESSWSPESEWMRTLPSAPFAQPISLKATPYERNSVQLEWVVPHKSTWNSDAIGYRIHYREYPSNETWQMEEIAIRDEHEDKEEKILAKLDSFKHYILRMRIFNSEGEGPFSAPVFAYVGYSIPKRNLNNIITEPLSSSSIRVKWDAWPKEDSETITSFKVRYVPVASVLSSVSSEEEIMIVDTNECTLNDLRKFTEYQISVSPYNRAGEGKMSQVRDKTLEDKPGPVGILRFSDVLMDSVKVSWDEPSQPNGNVIGYIVNYKGYRMQEEFKNEDQQRTSRNYFDTHGLAEGVTYFFSVWAETSAGKGEQRSANVTIGPSKDGPPPPSKPQITSGQSYVTLNWNDVADSDEIVGHLLQAKRVSVAEEAPANGYVSQRPRRNEIKGAKSAAQTAAATSTRPTHPIGEWITLRPTEGRSEKEQVSYRELQPSSYYAFRVFTRNVRGIGMASVETEQLFVPESIPDDPFYTTWWFMALVAMGAFVLIVIIIAILCVTGSSAKYRREKRSRSIDSLQLADGNFASFQLKGTSAANMTRSRELPTRPGTTQSWVSDQSREPPAYGSVLGGSRNSGGVMNMYGLATDVIPPLPNSGPPHTSVEAMQKLSALVGRDIRSQNTAYVTPSARGGSDNGRNEYMPTRSDLYATRSEYGRVEYRGHIPSSSGGSGAGSQPQGSPLQQPEVYDSFDEEEDVVDDDTVIRGDRTMTDGVDDIARHYGSTDQYRDTWRKVRDTDMVRAPILTGHPSSAAGRSSTTDSTSEGPWANIPATPNLTTGFSSFV.

Residues 1–26 (MRNRLLLIFYTTTVLWTIGYTQLVLG) form the signal peptide. Topologically, residues 27–2019 (KPPIFQDGGS…IPDDPFYTTW (1993 aa)) are extracellular. Ig-like C2-type domains follow at residues 28–105 (PPIF…AAIS), 217–319 (PSLQ…AYMT), and 324–397 (PILK…ADLA). 3 cysteine pairs are disulfide-bonded: Cys-52–Cys-94, Cys-247–Cys-301, and Cys-345–Cys-386. Asn-407 carries N-linked (GlcNAc...) asparagine glycosylation. 2 consecutive Ig-like C2-type domains span residues 456–544 (PSQK…VQVN) and 547–638 (SLIE…AMLQ). 2 cysteine pairs are disulfide-bonded: Cys-480–Cys-528 and Cys-568–Cys-622. Asn-632, Asn-655, Asn-807, Asn-868, Asn-932, and Asn-1016 each carry an N-linked (GlcNAc...) asparagine glycan. 13 Fibronectin type-III domains span residues 645–751 (MPER…MPQQ), 756–853 (APRN…TSEG), 858–957 (APKN…TEED), 961–1055 (SVDE…VPPE), 1059–1154 (RPSM…TLQT), 1159–1254 (PSQR…TYES), 1259–1359 (SPRN…TMED), 1363–1457 (PPES…SSVR), 1463–1566 (APAP…TLPS), 1571–1671 (QPIS…VGYS), 1673–1775 (PKRN…DKPG), 1776–1872 (PVGI…SKDG), and 1873–2004 (PPPP…TEQL). The interval 1036-1059 (TRKGDGPVEETKFESGVPPELPGR) is disordered. The segment covering 1037 to 1048 (RKGDGPVEETKF) has biased composition (basic and acidic residues). Asn-1107 is a glycosylation site (N-linked (GlcNAc...) asparagine). The disordered stretch occupies residues 1137 to 1161 (KGRGAPSEPSRSFETLQTNPDTPSQ). Polar residues predominate over residues 1145 to 1161 (PSRSFETLQTNPDTPSQ). A glycan (N-linked (GlcNAc...) asparagine) is linked at Asn-1614. Disordered stretches follow at residues 1857-1884 (GEQR…ITSG) and 1918-1947 (PANG…ATST). Asn-1863 carries an N-linked (GlcNAc...) asparagine glycan. Positions 1935 to 1947 (AKSAAQTAAATST) are enriched in low complexity. The helical transmembrane segment at 2020 to 2040 (WFMALVAMGAFVLIVIIIAIL) threads the bilayer. Over 2041 to 2325 (CVTGSSAKYR…NLTTGFSSFV (285 aa)) the chain is Cytoplasmic. 4 disordered regions span residues 2080 to 2113 (NMTR…SVLG), 2164 to 2187 (TAYV…PTRS), 2202 to 2226 (RGHI…LQQP), and 2285 to 2325 (ILTG…SSFV). Over residues 2091 to 2100 (PGTTQSWVSD) the composition is skewed to polar residues. Low complexity predominate over residues 2215–2226 (GSQPQGSPLQQP). Composition is skewed to polar residues over residues 2294 to 2305 (AGRSSTTDSTSE) and 2313 to 2325 (ATPN…SSFV).

This sequence belongs to the sidekick family.

It is found in the membrane. In terms of biological role, cell adhesion protein. In Caenorhabditis elegans, this protein is Protein sidekick homolog (rig-4).